We begin with the raw amino-acid sequence, 576 residues long: Putative export ATP-binding/permease protein RC1073 (576 aa).

An ABC transmembrane type-1 domain is found at 20-303; it reads LIIVMISLLS…IFELLSEMHL (284 aa). A run of 6 helical transmembrane segments spans residues 21 to 41, 57 to 77, 135 to 155, 158 to 178, 242 to 262, and 277 to 297; these read IIVM…GSVF, VDNS…ASFF, FLSF…LMFF, FKLA…LIKF, ALFF…VVWI, and IISF…IFEL. Residues 336 to 572 enclose the ABC transporter domain; it reads IEFKNVDFTY…SEIYRNICRE (237 aa). Residue 371-378 coordinates ATP; it reads GRSGAGKS.

It belongs to the ABC transporter superfamily. As to quaternary structure, homodimer.

The protein resides in the cell inner membrane. Part of an ABC transporter complex. Transmembrane domains (TMD) form a pore in the inner membrane and the ATP-binding domain (NBD) is responsible for energy generation. The sequence is that of Putative export ATP-binding/permease protein RC1073 from Rickettsia conorii (strain ATCC VR-613 / Malish 7).